A 270-amino-acid chain; its full sequence is Phospholysine phosphohistidine inorganic pyrophosphate phosphatase (270 aa).

The Mg(2+) site is built by aspartate 17 and serine 19. Substrate contacts are provided by residues 17–19 (DIS), 54–55 (TN), and lysine 189. Aspartate 214 is a binding site for Mg(2+).

The protein belongs to the HAD-like hydrolase superfamily. In terms of assembly, homodimer. Mg(2+) serves as cofactor.

It localises to the cytoplasm. It is found in the nucleus. It carries out the reaction diphosphate + H2O = 2 phosphate + H(+). Phosphatase that hydrolyzes imidodiphosphate, 3-phosphohistidine and 6-phospholysine. Has broad substrate specificity and can also hydrolyze inorganic diphosphate, but with lower efficiency. This chain is Phospholysine phosphohistidine inorganic pyrophosphate phosphatase (Lhpp), found in Mus musculus (Mouse).